Reading from the N-terminus, the 206-residue chain is Putative archaetidylserine decarboxylase proenzyme (206 aa).

Catalysis depends on S172, which acts as the Schiff-base intermediate with substrate; via pyruvic acid. S172 carries the pyruvic acid (Ser); by autocatalysis modification.

This sequence belongs to the phosphatidylserine decarboxylase family. PSD-A subfamily. In terms of assembly, heterodimer of a large membrane-associated beta subunit and a small pyruvoyl-containing alpha subunit. Pyruvate serves as cofactor. Is synthesized initially as an inactive proenzyme. Formation of the active enzyme involves a self-maturation process in which the active site pyruvoyl group is generated from an internal serine residue via an autocatalytic post-translational modification. Two non-identical subunits are generated from the proenzyme in this reaction, and the pyruvate is formed at the N-terminus of the alpha chain, which is derived from the carboxyl end of the proenzyme. The post-translation cleavage follows an unusual pathway, termed non-hydrolytic serinolysis, in which the side chain hydroxyl group of the serine supplies its oxygen atom to form the C-terminus of the beta chain, while the remainder of the serine residue undergoes an oxidative deamination to produce ammonia and the pyruvoyl prosthetic group on the alpha chain.

It localises to the cell membrane. The enzyme catalyses archaetidylserine + H(+) = archaetidylethanolamine + CO2. In terms of biological role, catalyzes the formation of archaetidylethanolamine (PtdEtn) from archaetidylserine (PtdSer). In Methanocaldococcus jannaschii (strain ATCC 43067 / DSM 2661 / JAL-1 / JCM 10045 / NBRC 100440) (Methanococcus jannaschii), this protein is Putative archaetidylserine decarboxylase proenzyme.